A 392-amino-acid polypeptide reads, in one-letter code: MKVENGQLQGWWAQRAEGPAKILAIGTATPFHWVDQNSYPDYYFRVTNSQHLVDLKEKFRRICSKTMIKKRHMFLTEELLRKNPTLCSHNEPSLDIRQDILVSEIPKLGKEAALKAIGEWGQPKSTITHLVFCTRSGVDMPGADCQLVKLLGLSPSVQRLMMYQQGCFAGGTMLRLAKDLAENNKGARVLVVCAESSAIGFRGPSEANVDNLIAQALFGDGAAALIIGSDPKPGLERPVFEIFSAAQTFVPNGDCHLALHLREMGLTFHCTKDVPPTIAKNVESCLIKAFEPLGISDWNSLFWILHPGGNAIVDQVESTLGLGPEKLRATRNILSEYGNLSSACCLFILDEIRKKSAREGMRTSGDGLDLGVLLSFGPGLTIETVVLRSVPI.

The active site involves Cys167.

The protein belongs to the thiolase-like superfamily. Chalcone/stilbene synthases family. In terms of tissue distribution, expressed at low level in seedlings after illumination with UV light. No expression in flowers or tissue culture.

It catalyses the reaction (E)-4-coumaroyl-CoA + 3 malonyl-CoA + 3 H(+) = 2',4,4',6'-tetrahydroxychalcone + 3 CO2 + 4 CoA. The protein operates within secondary metabolite biosynthesis; flavonoid biosynthesis. Its function is as follows. The primary product of this enzyme is 4,2',4',6'-tetrahydroxychalcone (also termed naringenin-chalcone or chalcone) which can under specific conditions spontaneously isomerize into naringenin. The protein is Chalcone synthase B (CHSB) of Petunia hybrida (Petunia).